A 147-amino-acid chain; its full sequence is Ubiquitin-conjugating enzyme E2-16 kDa (147 aa).

The 147-residue stretch at 1-147 (MALKRINKEL…AREWTRKYAI (147 aa)) folds into the UBC core domain. The active-site Glycyl thioester intermediate is Cys-107.

Belongs to the ubiquitin-conjugating enzyme family.

It catalyses the reaction S-ubiquitinyl-[E1 ubiquitin-activating enzyme]-L-cysteine + [E2 ubiquitin-conjugating enzyme]-L-cysteine = [E1 ubiquitin-activating enzyme]-L-cysteine + S-ubiquitinyl-[E2 ubiquitin-conjugating enzyme]-L-cysteine.. It participates in protein modification; protein ubiquitination. In terms of biological role, catalyzes the covalent attachment of ubiquitin to other proteins. This Pyricularia oryzae (strain 70-15 / ATCC MYA-4617 / FGSC 8958) (Rice blast fungus) protein is Ubiquitin-conjugating enzyme E2-16 kDa (UBC1).